A 655-amino-acid chain; its full sequence is Interferon-induced GTP-binding protein Mx2 (655 aa).

The span at 1 to 18 (MVLSTEENTGVDSVNLPS) shows a compositional bias: polar residues. Residues 1 to 28 (MVLSTEENTGVDSVNLPSGETGLGEKDQ) are disordered. A Dynamin-type G domain is found at 60 to 333 (DLALPAIAVI…LISHICKSLP (274 aa)). Positions 70–77 (GDQSSGKS) are G1 motif. 70-77 (GDQSSGKS) is a binding site for GTP. Positions 95–97 (VTR) are G2 motif. The segment at 171-174 (DLPG) is G3 motif. Residues 171–175 (DLPGI) and 240–243 (TKPD) each bind GTP. Positions 240 to 243 (TKPD) are G4 motif. Residues 272–275 (KCRG) are G5 motif. A disordered region spans residues 542 to 562 (EAEEEKKTKHGTSSSSQSQDL). Residues 552-562 (GTSSSSQSQDL) show a composition bias toward low complexity. The GED domain occupies 567–655 (MAEIFQHLNA…ARRRLAKFPG (89 aa)).

This sequence belongs to the TRAFAC class dynamin-like GTPase superfamily. Dynamin/Fzo/YdjA family.

The protein localises to the cytoplasm. Functionally, interferon-induced dynamin-like GTPase with antiviral activity against vesicular stomatitis virus (VSV) and Hantaan virus (HNTV). The protein is Interferon-induced GTP-binding protein Mx2 (Mx2) of Mus musculus (Mouse).